The sequence spans 635 residues: Threonine--tRNA ligase (635 aa).

In terms of domain architecture, TGS spans M1–T61. The segment at D242–P533 is catalytic. Zn(2+)-binding residues include C333, H384, and H510.

The protein belongs to the class-II aminoacyl-tRNA synthetase family. As to quaternary structure, homodimer. Zn(2+) is required as a cofactor.

The protein localises to the cytoplasm. It catalyses the reaction tRNA(Thr) + L-threonine + ATP = L-threonyl-tRNA(Thr) + AMP + diphosphate + H(+). Catalyzes the attachment of threonine to tRNA(Thr) in a two-step reaction: L-threonine is first activated by ATP to form Thr-AMP and then transferred to the acceptor end of tRNA(Thr). Also edits incorrectly charged L-seryl-tRNA(Thr). The polypeptide is Threonine--tRNA ligase (Burkholderia lata (strain ATCC 17760 / DSM 23089 / LMG 22485 / NCIMB 9086 / R18194 / 383)).